The primary structure comprises 217 residues: Cytochrome b5 domain-containing protein 1 (217 aa).

The Cytochrome b5 heme-binding domain maps to 6–72 (PRYFTPREVS…NPKTGDVKTH (67 aa)). The heme site is built by H41 and H72.

Belongs to the cytochrome b5 family.

Its subcellular location is the cytoplasm. It is found in the cytoskeleton. The protein localises to the cilium axoneme. Its function is as follows. Radial spoke stalk protein that binds heme under oxidizing conditions. Required for the coordinated beating of multiple cilia maybe by functioning in a redox signaling pathway. The polypeptide is Cytochrome b5 domain-containing protein 1 (cyb5d1) (Xenopus laevis (African clawed frog)).